Consider the following 955-residue polypeptide: Calsyntenin-2 (955 aa).

Residues 1–20 form the signal peptide; sequence MLPGRLCWVPLLLALGVGSG. At 21-831 the chain is on the extracellular side; it reads SGGGGDSRQR…SIQHSSVVPS (811 aa). Cadherin domains are found at residues 44 to 160 and 161 to 280; these read IETS…APTF and KEPA…MPLF. 2 N-linked (GlcNAc...) asparagine glycosylation sites follow: N56 and N98. N342, N374, N716, and N729 each carry an N-linked (GlcNAc...) asparagine glycan. Residues 832–852 traverse the membrane as a helical segment; that stretch reads IATVVIIISVCMLVFVVAMGV. Over 853–955 the chain is Cytoplasmic; the sequence is YRVRIAHQHF…LEWDDSTLPY (103 aa). The disordered stretch occupies residues 887-955; sequence PMEKHEGPGH…LEWDDSTLPY (69 aa). Positions 888–898 are enriched in basic and acidic residues; that stretch reads MEKHEGPGHGE. Acidic residues-rich tracts occupy residues 899-913 and 920-929; these read DETEGEEEEEAEEEM and DDSEEEEEEE.

This sequence belongs to the calsyntenin family. Proteolytically processed under normal cellular conditions. A primary zeta-cleavage generates a large extracellular (soluble) N-terminal domain (sAlc) and a short C-terminal transmembrane fragment (CTF1). A secondary cleavage catalyzed by gamma-secretase within the transmembrane domain releases the beta-Alc-gamma chain in the extracellular milieu and produces an intracellular fragment (AlcICD). This processing is strongly suppressed in the tripartite complex formed with APBA2 and APP, which seems to prevent the association with PSEN1. In terms of tissue distribution, restricted to the brain.

It localises to the postsynaptic cell membrane. Its subcellular location is the endoplasmic reticulum membrane. The protein localises to the golgi apparatus membrane. It is found in the cell projection. The protein resides in the dendrite. Postsynaptic adhesion molecule that binds to presynaptic neurexins to mediate synapse formation, and which is involved in learning and memory. Promotes synapse development by acting as a cell adhesion molecule at the postsynaptic membrane, which associates with neurexin-alpha at the presynaptic membrane. This Homo sapiens (Human) protein is Calsyntenin-2.